Reading from the N-terminus, the 229-residue chain is Large ribosomal subunit protein uL1 (229 aa).

The protein belongs to the universal ribosomal protein uL1 family. As to quaternary structure, part of the 50S ribosomal subunit.

In terms of biological role, binds directly to 23S rRNA. The L1 stalk is quite mobile in the ribosome, and is involved in E site tRNA release. Protein L1 is also a translational repressor protein, it controls the translation of the L11 operon by binding to its mRNA. This is Large ribosomal subunit protein uL1 from Streptococcus sanguinis (strain SK36).